We begin with the raw amino-acid sequence, 323 residues long: MRTATLYRYSVPMEAGVILRHQRLKSRDGLLVKLQQGELSGWGEIAPLPEFSQETLDQAQVAAECWLQHWVSGVESDDSVLPSVAFGLSCAQAELKQTLPLSADYRKAPLCTGDPDELFAVLQALPGEKVAKVKVGLYEAVRDGMIVNVLLEALPDLTLRLDANRSWSRAKADGFAKYVNPALRSRIAFLEEPCKTRAESREFAQDTGIAIAWDESVREADFQVEAEPGVAAIVIKPTLVGSLARCQQLVQQAHQAGLVAVISSSIESSLGLTQLARLAAWLTPVTVPGLDTLDLMQAQVVRPWPDSPLPLITTEQLGVVWHR.

Catalysis depends on K134, which acts as the Proton donor. Positions 162, 191, and 214 each coordinate Mg(2+). K236 (proton acceptor) is an active-site residue.

It belongs to the mandelate racemase/muconate lactonizing enzyme family. MenC type 1 subfamily. Requires a divalent metal cation as cofactor.

It carries out the reaction (1R,6R)-6-hydroxy-2-succinyl-cyclohexa-2,4-diene-1-carboxylate = 2-succinylbenzoate + H2O. It functions in the pathway quinol/quinone metabolism; 1,4-dihydroxy-2-naphthoate biosynthesis; 1,4-dihydroxy-2-naphthoate from chorismate: step 4/7. The protein operates within quinol/quinone metabolism; menaquinone biosynthesis. Its function is as follows. Converts 2-succinyl-6-hydroxy-2,4-cyclohexadiene-1-carboxylate (SHCHC) to 2-succinylbenzoate (OSB). The sequence is that of o-succinylbenzoate synthase from Yersinia pestis bv. Antiqua (strain Antiqua).